The chain runs to 257 residues: Hydroxyacylglutathione hydrolase (257 aa).

Zn(2+)-binding residues include His-53, His-55, Asp-57, His-58, His-109, Asp-126, and His-164.

This sequence belongs to the metallo-beta-lactamase superfamily. Glyoxalase II family. As to quaternary structure, monomer. Zn(2+) serves as cofactor.

The catalysed reaction is an S-(2-hydroxyacyl)glutathione + H2O = a 2-hydroxy carboxylate + glutathione + H(+). Its pathway is secondary metabolite metabolism; methylglyoxal degradation; (R)-lactate from methylglyoxal: step 2/2. Functionally, thiolesterase that catalyzes the hydrolysis of S-D-lactoyl-glutathione to form glutathione and D-lactic acid. This is Hydroxyacylglutathione hydrolase from Baumannia cicadellinicola subsp. Homalodisca coagulata.